A 172-amino-acid polypeptide reads, in one-letter code: Small ribosomal subunit protein uS5 (172 aa).

The S5 DRBM domain maps to 17 to 80 (LREKMIAVNR…DEARRKMVKV (64 aa)).

It belongs to the universal ribosomal protein uS5 family. In terms of assembly, part of the 30S ribosomal subunit. Contacts proteins S4 and S8.

In terms of biological role, with S4 and S12 plays an important role in translational accuracy. Its function is as follows. Located at the back of the 30S subunit body where it stabilizes the conformation of the head with respect to the body. The chain is Small ribosomal subunit protein uS5 from Ralstonia nicotianae (strain ATCC BAA-1114 / GMI1000) (Ralstonia solanacearum).